The chain runs to 488 residues: Putative BPI/LBP family protein At1g04970 (488 aa).

The signal sequence occupies residues 1–24 (MDVGRCFLFLLLPSFFFLPSQTQS). N-linked (GlcNAc...) asparagine glycosylation is found at Asn79, Asn109, Asn231, Asn242, and Asn341.

It belongs to the BPI/LBP/Plunc superfamily. BPI/LBP (TC 1.C.40) family.

This is Putative BPI/LBP family protein At1g04970 from Arabidopsis thaliana (Mouse-ear cress).